We begin with the raw amino-acid sequence, 328 residues long: D-cysteine desulfhydrase (328 aa).

Lys51 carries the post-translational modification N6-(pyridoxal phosphate)lysine.

This sequence belongs to the ACC deaminase/D-cysteine desulfhydrase family. As to quaternary structure, homodimer. Pyridoxal 5'-phosphate serves as cofactor.

It carries out the reaction D-cysteine + H2O = hydrogen sulfide + pyruvate + NH4(+) + H(+). Its function is as follows. Catalyzes the alpha,beta-elimination reaction of D-cysteine and of several D-cysteine derivatives. It could be a defense mechanism against D-cysteine. In Escherichia fergusonii (strain ATCC 35469 / DSM 13698 / CCUG 18766 / IAM 14443 / JCM 21226 / LMG 7866 / NBRC 102419 / NCTC 12128 / CDC 0568-73), this protein is D-cysteine desulfhydrase.